Reading from the N-terminus, the 210-residue chain is ATP-dependent dethiobiotin synthetase BioD (210 aa).

13–18 (DVGKTV) provides a ligand contact to ATP. Residue Thr17 coordinates Mg(2+). Lys33 is a catalytic residue. Residues Arg47 and Glu101 each coordinate Mg(2+). ATP is bound by residues 101–104 (EGAG) and 185–187 (PPL).

The protein belongs to the dethiobiotin synthetase family. As to quaternary structure, homodimer. The cofactor is Mg(2+).

Its subcellular location is the cytoplasm. The catalysed reaction is (7R,8S)-7,8-diammoniononanoate + CO2 + ATP = (4R,5S)-dethiobiotin + ADP + phosphate + 3 H(+). It participates in cofactor biosynthesis; biotin biosynthesis; biotin from 7,8-diaminononanoate: step 1/2. In terms of biological role, catalyzes a mechanistically unusual reaction, the ATP-dependent insertion of CO2 between the N7 and N8 nitrogen atoms of 7,8-diaminopelargonic acid (DAPA, also called 7,8-diammoniononanoate) to form a ureido ring. In Afipia carboxidovorans (strain ATCC 49405 / DSM 1227 / KCTC 32145 / OM5) (Oligotropha carboxidovorans), this protein is ATP-dependent dethiobiotin synthetase BioD.